Reading from the N-terminus, the 115-residue chain is T cell receptor delta variable 1 (115 aa).

A signal peptide spans 1–21 (MLFSSLLCVFVAFSYSGSSVA). One can recognise an Ig-like domain in the interval 22-115 (QKVTQAQSSV…SAKYFCALGE (94 aa)). Cysteines 43 and 111 form a disulfide.

As to quaternary structure, gamma-delta TR is a heterodimer composed of a gamma and delta chain; disulfide-linked. The gamma-delta TR is associated with the transmembrane signaling CD3 coreceptor proteins following the stoichiometry: a single gamma-delta TR heterodimer associates with one CD3D-CD3E heterodimer, one CD3G-CD3E heterodimer and one CD247 homodimer forming a stable octameric structure. Upon activation, gamma-delta TR complex associates with FCER1G to initiate intracellular signaling.

It localises to the cell membrane. V region of the variable domain of T cell receptor (TR) delta chain that participates in the antigen recognition. Gamma-delta TRs recognize a variety of self and foreign non-peptide antigens frequently expressed at the epithelial boundaries between the host and external environment, including endogenous lipids presented by MH-like protein CD1D and phosphoantigens presented by butyrophilin-like molecule BTN3A1. Upon antigen recognition induces rapid, innate-like immune responses involved in pathogen clearance and tissue repair. Binding of gamma-delta TR complex to antigen triggers phosphorylation of immunoreceptor tyrosine-based activation motifs (ITAMs) in the CD3 chains by the LCK and FYN kinases, allowing the recruitment, phosphorylation, and activation of ZAP70 that facilitates phosphorylation of the scaffolding proteins LCP2 and LAT. This lead to the formation of a supramolecular signalosome that recruits the phospholipase PLCG1, resulting in calcium mobilization and ERK activation, ultimately leading to T cell expansion and differentiation into effector cells. Gamma-delta TRs are produced through somatic rearrangement of a limited repertoire of variable (V), diversity (D), and joining (J) genes. The potential diversity of gamma-delta TRs is conferred by the unique ability to rearrange (D) genes in tandem and to utilize all three reading frames. The combinatorial diversity is considerably increased by the sequence exonuclease trimming and random nucleotide (N) region additions which occur during the V-(D)-J rearrangements. In Homo sapiens (Human), this protein is T cell receptor delta variable 1.